The chain runs to 230 residues: Demethylmenaquinone methyltransferase (230 aa).

Residues Thr62, Asp80, 102–103, and Ser119 contribute to the S-adenosyl-L-methionine site; that span reads DG.

Belongs to the class I-like SAM-binding methyltransferase superfamily. MenG/UbiE family.

It carries out the reaction a 2-demethylmenaquinol + S-adenosyl-L-methionine = a menaquinol + S-adenosyl-L-homocysteine + H(+). The protein operates within quinol/quinone metabolism; menaquinone biosynthesis; menaquinol from 1,4-dihydroxy-2-naphthoate: step 2/2. Functionally, methyltransferase required for the conversion of demethylmenaquinol (DMKH2) to menaquinol (MKH2). This Streptomyces griseus subsp. griseus (strain JCM 4626 / CBS 651.72 / NBRC 13350 / KCC S-0626 / ISP 5235) protein is Demethylmenaquinone methyltransferase.